Reading from the N-terminus, the 287-residue chain is Ribosomal RNA small subunit methyltransferase A (287 aa).

The segment covering 1 to 15 (MSKTTFDAQSITNSL) has biased composition (polar residues). Residues 1-20 (MSKTTFDAQSITNSLRAAKH) are disordered. S-adenosyl-L-methionine-binding residues include asparagine 29, leucine 31, glycine 56, glutamate 77, and asparagine 126.

Belongs to the class I-like SAM-binding methyltransferase superfamily. rRNA adenine N(6)-methyltransferase family. RsmA subfamily.

The protein localises to the cytoplasm. The catalysed reaction is adenosine(1518)/adenosine(1519) in 16S rRNA + 4 S-adenosyl-L-methionine = N(6)-dimethyladenosine(1518)/N(6)-dimethyladenosine(1519) in 16S rRNA + 4 S-adenosyl-L-homocysteine + 4 H(+). Functionally, specifically dimethylates two adjacent adenosines (A1518 and A1519) in the loop of a conserved hairpin near the 3'-end of 16S rRNA in the 30S particle. May play a critical role in biogenesis of 30S subunits. The chain is Ribosomal RNA small subunit methyltransferase A from Psychrobacter cryohalolentis (strain ATCC BAA-1226 / DSM 17306 / VKM B-2378 / K5).